Here is a 254-residue protein sequence, read N- to C-terminus: Fluoride-specific ion channel FluC 1 (254 aa).

3 helical membrane passes run 19–39, 51–71, and 80–100; these read LDILVANVVACFLLGTVTALY, IIGMGMMGGVSTFSSFAYGSV, and AFLIAAAYVTVSVVAGYVAVL. Na(+) is bound by residues Gly58 and Ser61.

Belongs to the fluoride channel Fluc/FEX (TC 1.A.43) family.

Its subcellular location is the cell inner membrane. It carries out the reaction fluoride(in) = fluoride(out). With respect to regulation, na(+) is not transported, but it plays an essential structural role and its presence is essential for fluoride channel function. Fluoride-specific ion channel. Important for reducing fluoride concentration in the cell, thus reducing its toxicity. The chain is Fluoride-specific ion channel FluC 1 from Brucella suis biovar 1 (strain 1330).